The sequence spans 1721 residues: Latent-transforming growth factor beta-binding protein 1 (1721 aa).

The first 23 residues, 1 to 23, serve as a signal peptide directing secretion; the sequence is MAGAWLRWGLLLWAGLLASSAHG. Over residues 64–81 the composition is skewed to low complexity; it reads RSSAAAGAPSRASPGVPS. Positions 64–158 are disordered; the sequence is RSSAAAGAPS…SGGGSRLQVH (95 aa). Over residues 99-111 the composition is skewed to pro residues; it reads RPPPPPPPEPARP. The segment covering 112–130 has biased composition (low complexity); it reads AVPGGQLHPNPGGHPAAAP. Positions 187–219 constitute an EGF-like 1 domain; the sequence is TKPSCVPPCQNGGMCLRPQLCVCKPGTKGKACE. Disulfide bonds link C191-C201, C195-C207, and C209-C218. Residues 228–259 form a disordered region; that stretch reads SPVFGGQSPGAASSWGPPEQAAKHTSSKKADT. N347 and N378 each carry an N-linked (GlcNAc...) asparagine glycan. The EGF-like 2 domain maps to 399–431; that stretch reads RVVICHLPCMNGGQCSSRDKCQCPPNFTGKLCQ. 6 disulfide bridges follow: C403-C413, C407-C419, C421-C430, C559-C581, C568-C594, and C582-C597. A glycan (N-linked (GlcNAc...) asparagine) is linked at N424. The 53-residue stretch at 557 to 609 folds into the TB 1 domain; sequence GRCFQETIGSQCGKALPGLSKQEDCCGTVGTSWGFNKCQKCPKKPSYHGYNQM. Residue N620 is glycosylated (N-linked (GlcNAc...) asparagine). One can recognise an EGF-like 3; calcium-binding domain in the interval 626-663; the sequence is DINECQLQGVCPNGECLNTMGSYRCTCKIGFGPDPTFS. 7 disulfides stabilise this stretch: C630-C641, C636-C650, C652-C665, C679-C702, C689-C714, C703-C717, and C704-C729. O-linked (Glc) serine glycosylation is present at S647. Residues 677–729 enclose the TB 2 domain; the sequence is GPCYRLVSSGRQCMHPLSVHLTKQLCCCSVGKAWGPHCEKCPLPGTAAFKEIC. The interval 750-811 is disordered; that stretch reads VGKGPVFVKP…APPEKEIPSL (62 aa). 2 O-linked (GalNAc...) threonine glycosylation sites follow: T769 and T801. The 38-residue stretch at 873 to 910 folds into the EGF-like 4; calcium-binding domain; the sequence is EINECTVNPDICGAGHCINLPVRYTCICYEGYRFSEQQ. Intrachain disulfides connect C877–C889, C884–C898, C900–C913, C919–C931, C926–C940, C942–C955, C961–C972, C967–C981, C984–C996, C1002–C1013, C1008–C1022, C1025–C1036, C1042–C1053, C1048–C1062, C1064–C1077, C1083–C1094, C1089–C1103, C1105–C1118, C1124–C1135, C1130–C1144, C1146–C1159, C1165–C1177, C1172–C1186, C1188–C1200, C1206–C1218, C1212–C1227, C1229–C1242, C1248–C1260, and C1254–C1269. Residues 915–956 form the EGF-like 5; calcium-binding domain; it reads DIDECTQVQHLCSQGRCENTEGSFLCICPAGFMASEEGTNCI. O-linked (Glc) serine glycosylation is present at S937. An EGF-like 6; calcium-binding domain is found at 957 to 997; the sequence is DVDECLRPDVCGEGHCVNTVGAFRCEYCDSGYRMTQRGRCE. N974 carries the (3R)-3-hydroxyasparagine modification. Positions 998–1037 constitute an EGF-like 7; calcium-binding domain; it reads DIDECLNPSTCPDEQCVNSPGSYQCVPCTEGFRGWNGQCL. O-linked (Glc) serine glycosylation occurs at S1019. One can recognise an EGF-like 8; calcium-binding domain in the interval 1038 to 1078; the sequence is DVDECLEPNVCANGDCSNLEGSYMCSCHKGYTRTPDHKHCR. An O-linked (Glc) serine glycan is attached at S1059. In terms of domain architecture, EGF-like 9; calcium-binding spans 1079–1119; sequence DIDECQQGNLCVNGQCKNTEGSFRCTCGQGYQLSAAKDQCE. The 41-residue stretch at 1120 to 1160 folds into the EGF-like 10; calcium-binding domain; it reads DIDECQHRHLCAHGQCRNTEGSFQCVCDQGYRASGLGDHCE. Residue N1137 is modified to (3R)-3-hydroxyasparagine. O-linked (Glc) serine glycosylation occurs at S1141. The EGF-like 11; calcium-binding domain maps to 1161-1201; the sequence is DINECLEDKSVCQRGDCINTAGSYDCTCPDGFQLDDNKTCQ. The Cell attachment site motif lies at 1174–1176; that stretch reads RGD. N1197 carries an N-linked (GlcNAc...) asparagine glycan. Positions 1202–1243 constitute an EGF-like 12; calcium-binding domain; that stretch reads DINECEHPGLCGPQGECLNTEGSFHCVCQQGFSISADGRTCE. O-linked (Glc) serine glycosylation occurs at S1224. The 38-residue stretch at 1244–1281 folds into the EGF-like 13; calcium-binding domain; sequence DIDECVNNTVCDSHGFCDNTAGSFRCLCYQGFQAPQDG. A glycan (N-linked (GlcNAc...) asparagine) is linked at N1250. One can recognise an EGF-like 14; calcium-binding domain in the interval 1286–1328; it reads DVNECELLSGVCGEAFCENVEGSFLCVCADENQEYSPMTGQCR. An 8-Cys3 region region spans residues 1344–1411; sequence EEKKECYYNL…PKGKGFVPAG (68 aa). Residues 1347 to 1401 form the TB 3 domain; sequence KECYYNLNDASLCDNVLAPNVTKQECCCTSGVGWGDNCEIFPCPVLGTAEFTEMC. Disulfide bonds link C1349/C1372, C1359/C1384, C1373/C1389, and C1374/C1401. The N-linked (GlcNAc...) asparagine glycan is linked to N1366. Residue S1414 is modified to Phosphoserine; by FAM20C. The 43-residue stretch at 1424 to 1466 folds into the EGF-like 15; calcium-binding domain; sequence DADECLLFGQEICKNGFCLNTRPGYECYCKQGTYYDPVKLQCF. In terms of domain architecture, EGF-like 16; calcium-binding spans 1467 to 1503; that stretch reads DMDECQDPSSCIDGQCVNTEGSYNCFCTHPMVLDASE. Disulfide bonds link C1471/C1482, C1477/C1491, C1526/C1550, C1536/C1562, C1551/C1565, and C1552/C1577. S1488 carries an O-linked (Glc) serine glycan. The segment at 1507 to 1721 is C-terminal domain; sequence IRPAESNEQI…LNLEKDSDLE (215 aa). In terms of domain architecture, TB 4 spans 1524-1577; the sequence is DLCWEHLSDEYVCSRPLVGKQTTYTECCCLYGEAWGMQCALCPLKDSDDYAQLC. Phosphoserine occurs at positions 1597 and 1616. The region spanning 1621–1657 is the EGF-like 17 domain; sequence QAEECGILNGCENGRCVRVQEGYTCDCFDGYHLDTAK. 5 disulfides stabilise this stretch: C1625-C1636, C1631-C1645, C1666-C1681, C1676-C1690, and C1692-C1705. An EGF-like 18; calcium-binding domain is found at 1662–1706; sequence DVNECDELNNRMSLCKNAKCINTDGSYKCLCLPGYVPSDKPNYCT. S1687 is a glycosylation site (O-linked (Glc) serine).

The protein belongs to the LTBP family. In terms of assembly, interacts with TGFB1; associates via disulfide bonds with the Latency-associated peptide chain (LAP) regulatory chain of TGFB1, leading to regulate activation of TGF-beta-1. LTBP1 does not bind directly to TGF-beta-1, the active chain of TGFB1. Interacts (via C-terminal domain) with FBN1 (via N-terminal domain). Interacts with FBN2. Interacts with ADAMTSL2. Interacts with EFEMP2. Contains hydroxylated asparagine residues. In terms of processing, isoform Short N-terminus is blocked. Post-translationally, two intrachain disulfide bonds from the TB3 domain are rearranged upon TGFB1 binding, and form interchain bonds with TGFB1 propeptide, anchoring it to the extracellular matrix. O-glycosylated on serine residues by POGLUT2 and POGLUT3. Expressed in the aorta (at protein level). Isoform Long: Expressed in fibroblasts.

The protein localises to the secreted. It localises to the extracellular space. It is found in the extracellular matrix. Functionally, key regulator of transforming growth factor beta (TGFB1, TGFB2 and TGFB3) that controls TGF-beta activation by maintaining it in a latent state during storage in extracellular space. Associates specifically via disulfide bonds with the Latency-associated peptide (LAP), which is the regulatory chain of TGF-beta, and regulates integrin-dependent activation of TGF-beta. Outcompeted by LRRC32/GARP for binding to LAP regulatory chain of TGF-beta. This chain is Latent-transforming growth factor beta-binding protein 1, found in Homo sapiens (Human).